The primary structure comprises 315 residues: Homoserine kinase (315 aa).

97–107 (PPARGLGSSAT) serves as a coordination point for ATP.

Belongs to the GHMP kinase family. Homoserine kinase subfamily.

The protein localises to the cytoplasm. The enzyme catalyses L-homoserine + ATP = O-phospho-L-homoserine + ADP + H(+). Its pathway is amino-acid biosynthesis; L-threonine biosynthesis; L-threonine from L-aspartate: step 4/5. In terms of biological role, catalyzes the ATP-dependent phosphorylation of L-homoserine to L-homoserine phosphate. The chain is Homoserine kinase from Prochlorococcus marinus (strain MIT 9215).